Reading from the N-terminus, the 252-residue chain is Probable oligoribonuclease (252 aa).

The Exonuclease domain occupies 81–241 (VWIDCEMTGL…ALSDILESIG (161 aa)). Y202 is an active-site residue.

The protein belongs to the oligoribonuclease family.

It localises to the cytoplasm. It is found in the nucleus. In terms of biological role, 3'-to-5' exoribonuclease specific for small oligoribonucleotides. The chain is Probable oligoribonuclease (rex2) from Schizosaccharomyces pombe (strain 972 / ATCC 24843) (Fission yeast).